Here is a 412-residue protein sequence, read N- to C-terminus: Phosphoglycerate kinase (412 aa).

Substrate is bound by residues 26–28, arginine 42, 65–68, arginine 133, and arginine 166; these read DFN and HLGR. ATP-binding positions include lysine 217, glycine 308, glutamate 339, and 368–371; that span reads GGDS.

Belongs to the phosphoglycerate kinase family. In terms of assembly, monomer.

It localises to the cytoplasm. It catalyses the reaction (2R)-3-phosphoglycerate + ATP = (2R)-3-phospho-glyceroyl phosphate + ADP. Its pathway is carbohydrate degradation; glycolysis; pyruvate from D-glyceraldehyde 3-phosphate: step 2/5. The protein is Phosphoglycerate kinase of Synechococcus sp. (strain JA-3-3Ab) (Cyanobacteria bacterium Yellowstone A-Prime).